A 359-amino-acid polypeptide reads, in one-letter code: Ornithine cyclodeaminase (359 aa).

Residues Arg-53 and Lys-77 each coordinate L-ornithine. Residues Thr-92, Arg-120, 147 to 148 (AQ), Asp-169, Thr-209, 232 to 235 (VGGD), Lys-239, and Ser-300 contribute to the NAD(+) site. Position 120 (Arg-120) interacts with L-ornithine. Asp-235 lines the L-ornithine pocket. Catalysis depends on Asp-235, which acts as the Proton donor/acceptor. Residue Val-301 participates in L-ornithine binding.

Belongs to the ornithine cyclodeaminase/mu-crystallin family. NAD(+) serves as cofactor.

The catalysed reaction is L-ornithine = L-proline + NH4(+). It participates in amino-acid biosynthesis; L-proline biosynthesis; L-proline from L-ornithine: step 1/1. Catalyzes the conversion of L-ornithine into L-proline with release of ammonia. The polypeptide is Ornithine cyclodeaminase (Brucella abortus biovar 1 (strain 9-941)).